The chain runs to 53 residues: uncharacterized protein (53 aa).

The helical transmembrane segment at 24-44 threads the bilayer; the sequence is LMTFIAVNAVLSLILIRAVIL.

It localises to the membrane. This is an uncharacterized protein from Methanocaldococcus jannaschii (strain ATCC 43067 / DSM 2661 / JAL-1 / JCM 10045 / NBRC 100440) (Methanococcus jannaschii).